We begin with the raw amino-acid sequence, 392 residues long: Iripin-4 (392 aa).

The first 16 residues, 1–16 (MRSLATFMSLLTICWG), serve as a signal peptide directing secretion. N-linked (GlcNAc...) asparagine glycosylation is found at asparagine 104, asparagine 130, and asparagine 265.

The protein belongs to the serpin family. Female salivary gland.

The protein resides in the secreted. In terms of biological role, serpin with unknown function. Weakly inhibits human granzyme B (GZMB). Acts as a substrate for porcine elastase. The polypeptide is Iripin-4 (Ixodes ricinus (Common tick)).